A 538-amino-acid polypeptide reads, in one-letter code: Bifunctional purine biosynthesis protein PurH (538 aa).

The MGS-like domain maps to Ile8–Thr158.

It belongs to the PurH family.

It carries out the reaction (6R)-10-formyltetrahydrofolate + 5-amino-1-(5-phospho-beta-D-ribosyl)imidazole-4-carboxamide = 5-formamido-1-(5-phospho-D-ribosyl)imidazole-4-carboxamide + (6S)-5,6,7,8-tetrahydrofolate. The catalysed reaction is IMP + H2O = 5-formamido-1-(5-phospho-D-ribosyl)imidazole-4-carboxamide. Its pathway is purine metabolism; IMP biosynthesis via de novo pathway; 5-formamido-1-(5-phospho-D-ribosyl)imidazole-4-carboxamide from 5-amino-1-(5-phospho-D-ribosyl)imidazole-4-carboxamide (10-formyl THF route): step 1/1. It participates in purine metabolism; IMP biosynthesis via de novo pathway; IMP from 5-formamido-1-(5-phospho-D-ribosyl)imidazole-4-carboxamide: step 1/1. In Rhizobium rhizogenes (strain K84 / ATCC BAA-868) (Agrobacterium radiobacter), this protein is Bifunctional purine biosynthesis protein PurH.